The chain runs to 405 residues: L-carnitine CoA-transferase (405 aa).

CoA is bound by residues K97 and R104. The active-site Nucleophile is the D169.

This sequence belongs to the CoA-transferase III family. CaiB subfamily. Homodimer.

Its subcellular location is the cytoplasm. It carries out the reaction crotonobetainyl-CoA + (R)-carnitine = crotonobetaine + (R)-carnitinyl-CoA. The catalysed reaction is 4-(trimethylamino)butanoyl-CoA + (R)-carnitine = (R)-carnitinyl-CoA + 4-(trimethylamino)butanoate. It functions in the pathway amine and polyamine metabolism; carnitine metabolism. Its function is as follows. Catalyzes the reversible transfer of the CoA moiety from gamma-butyrobetainyl-CoA to L-carnitine to generate L-carnitinyl-CoA and gamma-butyrobetaine. Is also able to catalyze the reversible transfer of the CoA moiety from gamma-butyrobetainyl-CoA or L-carnitinyl-CoA to crotonobetaine to generate crotonobetainyl-CoA. The polypeptide is L-carnitine CoA-transferase (caiB) (Salmonella typhi).